We begin with the raw amino-acid sequence, 634 residues long: Chaperone protein HtpG (634 aa).

The segment at 1–342 (MTVETQKETL…SNDLSLNVSR (342 aa)) is a; substrate-binding. Residues 343–559 (EILQKDPIID…EQDLGLQMRQ (217 aa)) form a b region. The tract at residues 560–634 (ILEASGQKVP…LNKLLVELSA (75 aa)) is c.

Belongs to the heat shock protein 90 family. As to quaternary structure, homodimer.

It is found in the cytoplasm. Molecular chaperone. Has ATPase activity. This is Chaperone protein HtpG from Pseudomonas putida (strain ATCC 47054 / DSM 6125 / CFBP 8728 / NCIMB 11950 / KT2440).